The following is a 130-amino-acid chain: Small ribosomal subunit protein uS9 (130 aa).

It belongs to the universal ribosomal protein uS9 family.

The protein is Small ribosomal subunit protein uS9 of Sodalis glossinidius (strain morsitans).